A 312-amino-acid polypeptide reads, in one-letter code: 4-diphosphocytidyl-2-C-methyl-D-erythritol kinase (312 aa).

Residue Lys10 is part of the active site. An ATP-binding site is contributed by 105–115; the sequence is PVAGGMAGGSA. Asp146 is a catalytic residue.

Belongs to the GHMP kinase family. IspE subfamily.

It catalyses the reaction 4-CDP-2-C-methyl-D-erythritol + ATP = 4-CDP-2-C-methyl-D-erythritol 2-phosphate + ADP + H(+). The protein operates within isoprenoid biosynthesis; isopentenyl diphosphate biosynthesis via DXP pathway; isopentenyl diphosphate from 1-deoxy-D-xylulose 5-phosphate: step 3/6. Catalyzes the phosphorylation of the position 2 hydroxy group of 4-diphosphocytidyl-2C-methyl-D-erythritol. In Corynebacterium glutamicum (strain R), this protein is 4-diphosphocytidyl-2-C-methyl-D-erythritol kinase.